Here is a 718-residue protein sequence, read N- to C-terminus: MLTRQSRLLRRIPPPNAVLQSGLQRRHRSTDRYSNNIHTSSTQNAPAPVYDAPIREKGMTIEAKERVRAHARKIQSSASTAAASPAVRPQPAQHFQAAPQPMPANTPRFESDGQVKNGLDYSFIGLSGGQIFQEMMLRHDVKQVFGYPGGAILPVFDAIYNSPHFDFVLPRHEQGAGHMAEGYARVSGKPGVVLVTSGPGATNVITPMQDALSDGVPMVVFCGQVATNLIGSDAFQEADVVGISRSCTKWNVMVKDIAELPRRINEAFKIATTGRPGPVLVDLPKDVTAAILRTPIPAKSAQPGHSPYLPSNPLNPSSQPSDPLPGDADLITEAAQMINKAKRPIIFAGNGVLSSPEGPKLLKELSDKGRIPVTTTLQGLGAFDERDEKSLHMIGMHGSAYANFAMQEADVLIALGVRFDDRVTGKVDTFAPAAKAAAAEGRGGIIHFEIQPKNINKIVEAQIPVLGDVVASLAELVPQIEAVDRSAWIGRCKATKERYPFTYTPSQEGQKLKPQEVVQELDRQAEALGKEKFIISTGVGQHQMWACQYYRWTEPRSWVSSGGLGTMGFGLPSAIGAKVAAPEKYVIDIDGDASFSMTAMELATASQYDIGVKVLLFNNEFQGMVEQWQDLFYENRYSHTRMTNPDFVKLSESMGTKGLRCTKLEDLPRMMKEFLEYDGKRPIVLECLVSSEHVYPMIPAGKALHEQLLHPLLRNGSE.

2 disordered regions span residues 1–50 (MLTR…APVY) and 72–101 (RKIQ…APQP). Residues 32–45 (RYSNNIHTSSTQNA) are compositionally biased toward polar residues. A compositionally biased stretch (low complexity) spans 76–99 (SSASTAAASPAVRPQPAQHFQAAP). A thiamine diphosphate-binding site is contributed by Glu173. Residue Arg275 coordinates FAD. A disordered region spans residues 296–327 (IPAKSAQPGHSPYLPSNPLNPSSQPSDPLPGD). The span at 306–325 (SPYLPSNPLNPSSQPSDPLP) shows a compositional bias: low complexity. FAD is bound by residues 397 to 418 (HGSA…LGVR) and 449 to 468 (EIQP…VLGD). The segment at 541 to 621 (QHQMWACQYY…VKVLLFNNEF (81 aa)) is thiamine pyrophosphate binding. The Mg(2+) site is built by Asp592 and Asn619.

This sequence belongs to the TPP enzyme family. Requires Mg(2+) as cofactor. The cofactor is thiamine diphosphate.

Its subcellular location is the mitochondrion. It catalyses the reaction 2 pyruvate + H(+) = (2S)-2-acetolactate + CO2. It functions in the pathway amino-acid biosynthesis; L-isoleucine biosynthesis; L-isoleucine from 2-oxobutanoate: step 1/4. It participates in amino-acid biosynthesis; L-valine biosynthesis; L-valine from pyruvate: step 1/4. This chain is Acetolactate synthase, mitochondrial (ILV2), found in Cryptococcus neoformans var. neoformans serotype D (strain JEC21 / ATCC MYA-565) (Filobasidiella neoformans).